Consider the following 547-residue polypeptide: Threonylcarbamoyladenosine tRNA methylthiotransferase (547 aa).

Positions A30–T51 are disordered. The 109-residue stretch at Q59 to K167 folds into the MTTase N-terminal domain. The [4Fe-4S] cluster site is built by C68, C104, C133, C209, C213, and C216. Residues R195–D426 form the Radical SAM core domain. The TRAM domain occupies D426–E488. A helical membrane pass occupies residues I527–L547.

Belongs to the methylthiotransferase family. CDKAL1 subfamily. The cofactor is [4Fe-4S] cluster.

It localises to the endoplasmic reticulum membrane. It carries out the reaction N(6)-L-threonylcarbamoyladenosine(37) in tRNA + (sulfur carrier)-SH + AH2 + 2 S-adenosyl-L-methionine = 2-methylsulfanyl-N(6)-L-threonylcarbamoyladenosine(37) in tRNA + (sulfur carrier)-H + 5'-deoxyadenosine + L-methionine + A + S-adenosyl-L-homocysteine + 2 H(+). Its function is as follows. Catalyzes the methylthiolation of N6-threonylcarbamoyladenosine (t(6)A), leading to the formation of 2-methylthio-N6-threonylcarbamoyladenosine (ms(2)t(6)A) at position 37 in tRNAs that read codons beginning with adenine. This is Threonylcarbamoyladenosine tRNA methylthiotransferase (cdkal1) from Danio rerio (Zebrafish).